Reading from the N-terminus, the 204-residue chain is Recombination protein RecR (204 aa).

The segment at 58–75 (CSICQNVTDRDADPCRIC) adopts a C4-type zinc-finger fold. In terms of domain architecture, Toprim spans 83-181 (SVICVVESPV…MVTKIARGIP (99 aa)).

This sequence belongs to the RecR family.

Its function is as follows. May play a role in DNA repair. It seems to be involved in an RecBC-independent recombinational process of DNA repair. It may act with RecF and RecO. The protein is Recombination protein RecR of Chlorobium phaeovibrioides (strain DSM 265 / 1930) (Prosthecochloris vibrioformis (strain DSM 265)).